The primary structure comprises 219 residues: Intraflagellar transport protein 22 (219 aa).

Residues 12-19 (GPSKSGKS) and 72-79 (WDVGGSSK) contribute to the GTP site.

This sequence belongs to the small GTPase superfamily. Rab family.

The protein localises to the cytoplasm. Its subcellular location is the cytoskeleton. The protein resides in the flagellum basal body. It is found in the cell projection. It localises to the cilium. The protein localises to the flagellum. Functionally, required for flagellum formation. This chain is Intraflagellar transport protein 22 (IFT22), found in Trypanosoma brucei brucei (strain 927/4 GUTat10.1).